The following is a 118-amino-acid chain: MKTLTGLLLVGLLALWIGLPSTSSKILFGCGISPGNPFPCSLPGLTGNRCRRDYDCPQTLRCCNFRCSRSCRIPPVLPWSCPRNPFKCTIPGIDRCRYDYDCPGRQRCCYYSCSRICK.

The signal sequence occupies residues 1–24; sequence MKTLTGLLLVGLLALWIGLPSTSS. 2 consecutive WAP domains span residues 25-72 and 74-118; these read KILF…RSCR and PPVL…RICK. Disulfide bonds link cysteine 30-cysteine 63, cysteine 40-cysteine 67, cysteine 50-cysteine 62, cysteine 56-cysteine 71, cysteine 81-cysteine 109, cysteine 88-cysteine 113, cysteine 96-cysteine 108, and cysteine 102-cysteine 117.

Belongs to the venom waprin family. In terms of tissue distribution, expressed by the venom gland.

Its subcellular location is the secreted. Damages membranes of susceptible bacteria. Has no hemolytic activity. Not toxic to mice. Does not inhibit the proteinases elastase and cathepsin G. The protein is Waprin-Enh1 of Pseudoferania polylepis (Macleay's water snake).